A 353-amino-acid chain; its full sequence is Tsukushi (353 aa).

The signal sequence occupies residues 1-16 (MPWPLLLLLAVSGAQT). The region spanning 17–58 (TRPCFPGCQCEVETFGLFDSFSLTRVDCSGLGPHIMPVPIPL) is the LRRNT domain. 10 LRR repeats span residues 59-80 (DTAHLDLSSNRLEMVNESVLAG), 85-106 (TLAGLDLSHNLLTSISPTAFSR), 109-130 (YLESLDLSHNGLTALPAESFTS), 132-153 (PLSDVNLSHNQLREVSVSAFTT), 159-179 (ALHVDLSHNLIHRLVPHPTRA), 185-206 (TIQSLNLAWNRLHAVPNLRDLP), 207-227 (LRYLSLDGNPLAVIGPGAFAG), 230-249 (GLTHLSLASLQRLPELAPSG), 255-276 (GLQVLDLSGNPKLNWAGAEVFS), and 280-301 (SLQELDLSGTNLVPLPEALLLH). Residue Asn74 is glycosylated (N-linked (GlcNAc...) asparagine). Residue Asn137 is glycosylated (N-linked (GlcNAc...) asparagine).

As to quaternary structure, interacts with FZD4 (via FZ domain); competes with WNT2B for binding to FZD4, inhibiting Wnt signaling and repressing peripheral eye development. Interacts with TGFB1; the interaction contributes to regulation of the hair cycle. Interacts with netrin. Interacts with CCN2.

The protein resides in the secreted. Functionally, contributes to various developmental events and other processes such as wound healing and cholesterol homeostasis through its interactions with multiple signaling pathways. Wnt signaling inhibitor which competes with WNT2B for binding to Wnt receptor FZD4 and represses WNT2B-dependent development of the peripheral eye. Plays a role in regulating the hair cycle by controlling TGFB1 signaling. Required for the development of the anterior commissure in the brain by inhibiting neurite outgrowth. Essential for terminal differentiation of hippocampal neural stem cells. Plays a role in regulating bone elongation and bone mass by modulating growth plate chondrocyte function and overall body size. Required for development of the inner ear through its involvement in stereocilia formation in inner hair cells. Facilitates wound healing by inhibiting secretion of TGFB1 from macrophages which prevents myofibroblast differentiation, maintaining inflammatory cell quiescence. Plays a role in cholesterol homeostasis by reducing circulating high-density lipoprotein cholesterol, lowering cholesterol efflux capacity and decreasing cholesterol-to-bile acid conversion in the liver. In one study, shown to negatively regulate sympathetic innervation in brown fat, leading to reduced energy expenditure. In another study, shown not to affect brown fat thermogenic capacity, body weight gain or glucose homeostasis. The polypeptide is Tsukushi (TSKU) (Homo sapiens (Human)).